Consider the following 63-residue polypeptide: Small, acid-soluble spore protein H 2 (63 aa).

This sequence belongs to the SspH family.

The protein localises to the spore core. The sequence is that of Small, acid-soluble spore protein H 2 from Clostridium botulinum (strain ATCC 19397 / Type A).